The following is a 127-amino-acid chain: Small ribosomal subunit protein uS13 (127 aa).

The protein belongs to the universal ribosomal protein uS13 family. As to quaternary structure, part of the 30S ribosomal subunit. Forms a loose heterodimer with protein S19. Forms two bridges to the 50S subunit in the 70S ribosome.

Functionally, located at the top of the head of the 30S subunit, it contacts several helices of the 16S rRNA. In the 70S ribosome it contacts the 23S rRNA (bridge B1a) and protein L5 of the 50S subunit (bridge B1b), connecting the 2 subunits; these bridges are implicated in subunit movement. Contacts the tRNAs in the A and P-sites. This chain is Small ribosomal subunit protein uS13, found in Roseiflexus sp. (strain RS-1).